A 123-amino-acid polypeptide reads, in one-letter code: Major pollen allergen Ole e 10 (123 aa).

The signal sequence occupies residues 1–21; sequence MRGTAGVPDQPVPTPTPSVPT. A disordered region spans residues 1–37; it reads MRGTAGVPDQPVPTPTPSVPTSSSPVPKPPTQGNKKW. A disulfide bridge links C38 with C101.

Post-translationally, the N-terminus is blocked. Phosphorylated at Ser-24 when expressed as a recombinant protein in a heterologous system. In terms of processing, not glycosylated. Post-translationally, contains two additional disulfide bonds. Expressed in mature and germinating pollen.

It is found in the cytoplasmic vesicle. Functionally, carbohydrate-binding protein binding preferentially 1,3-beta-glucans. May be involved in pollen tube wall re-formation during germination. The polypeptide is Major pollen allergen Ole e 10 (Olea europaea (Common olive)).